The primary structure comprises 777 residues: BRCA1-associated RING domain protein 1 (777 aa).

The interval 1–32 (MPDNRQPRNRQPRIRSGNEPRSAPAMEPDGRG) is disordered. An interaction with BRCA1 region spans residues 26–119 (MEPDGRGAWA…KLRNLLHDNE (94 aa)). Residues 50–87 (CSRCTNILREPVCLGGCEHIFCSNCVSDCIGTGCPVCY) form an RING-type zinc finger. Glycyl lysine isopeptide (Lys-Gly) (interchain with G-Cter in SUMO2) cross-links involve residues K160 and K170. Residues 167 to 211 (PAIKKDASAQQDSYEFVSPSPPADVSERAKKASARSGKKQKKKTL) form a disordered region. S186 is subject to Phosphoserine. Positions 197-209 (KASARSGKKQKKK) are enriched in basic residues. Phosphothreonine is present on T299. Residues 356 to 404 (NIPLPECSSPPSCKRKVGGTSGRKNSNMSDEFISLSPGTPPSTLSSSSY) are disordered. Positions 389–404 (SLSPGTPPSTLSSSSY) are enriched in low complexity. S391 is modified (phosphoserine). The residue at position 394 (T394) is a Phosphothreonine. K423 is covalently cross-linked (Glycyl lysine isopeptide (Lys-Gly) (interchain with G-Cter in SUMO2)). 3 ANK repeats span residues 427–459 (RGET…VKDH), 460–492 (AGWT…TTGY), and 493–525 (QNDS…AVNI). Residues 526–546 (FGLRPVDYTDDESMKSLLLLP) form an ANK 4; degenerate repeat. Residue K548 forms a Glycyl lysine isopeptide (Lys-Gly) (interchain with G-Cter in SUMO2) linkage. The interval 554-558 (ASHCS) is flexible linker. 2 BRCT domains span residues 560 to 653 (MNTG…KYEI) and 667 to 777 (LLPK…PLDS).

As to quaternary structure, homo- and heterodimer. Heterodimer (RING-type zinc finger) with BRCA1. Heterodimer (via ANK repeats and BRCT domains) with CSTF1/CSTF-50. Component of the BRCA1-A complex, at least composed of the BRCA1, BARD1, UIMC1/RAP80, ABRAXAS1, BRCC3/BRCC36, BABAM2 and BABAM1/NBA1. Interacts with UBXN1. In terms of processing, processed during apoptosis. The homodimer is more susceptible to proteolytic cleavage than the BARD1/BRCA1 heterodimer.

It is found in the nucleus. The catalysed reaction is S-ubiquitinyl-[E2 ubiquitin-conjugating enzyme]-L-cysteine + [acceptor protein]-L-lysine = [E2 ubiquitin-conjugating enzyme]-L-cysteine + N(6)-ubiquitinyl-[acceptor protein]-L-lysine.. It participates in protein modification; protein ubiquitination. Its function is as follows. E3 ubiquitin-protein ligase. The BRCA1-BARD1 heterodimer specifically mediates the formation of 'Lys-6'-linked polyubiquitin chains and coordinates a diverse range of cellular pathways such as DNA damage repair, ubiquitination and transcriptional regulation to maintain genomic stability. Plays a central role in the control of the cell cycle in response to DNA damage. Acts by mediating ubiquitin E3 ligase activity that is required for its tumor suppressor function. Also forms a heterodimer with CSTF1/CSTF-50 to modulate mRNA processing and RNAP II stability by inhibiting pre-mRNA 3' cleavage. The protein is BRCA1-associated RING domain protein 1 (BARD1) of Homo sapiens (Human).